A 219-amino-acid chain; its full sequence is 2-hydroxy-3-keto-5-methylthiopentenyl-1-phosphate phosphatase (219 aa).

It belongs to the HAD-like hydrolase superfamily. MtnX family.

It catalyses the reaction 2-hydroxy-5-methylsulfanyl-3-oxopent-1-enyl phosphate + H2O = 1,2-dihydroxy-5-(methylsulfanyl)pent-1-en-3-one + phosphate. Its pathway is amino-acid biosynthesis; L-methionine biosynthesis via salvage pathway; L-methionine from S-methyl-5-thio-alpha-D-ribose 1-phosphate: step 4/6. Dephosphorylates 2-hydroxy-3-keto-5-methylthiopentenyl-1-phosphate (HK-MTPenyl-1-P) yielding 1,2-dihydroxy-3-keto-5-methylthiopentene (DHK-MTPene). The protein is 2-hydroxy-3-keto-5-methylthiopentenyl-1-phosphate phosphatase of Bacillus mycoides (strain KBAB4) (Bacillus weihenstephanensis).